A 241-amino-acid polypeptide reads, in one-letter code: GPI-anchored hemophore RBT5 (241 aa).

An N-terminal signal peptide occupies residues 1–20 (MLALSLLSIVSIASAAGVTA). Positions 26–137 (NPYTIFPSVA…DALAKAADAA (112 aa)) constitute a CFEM domain. 4 disulfides stabilise this stretch: C54-C94, C58-C89, C68-C75, and C77-C110. D72 is a heme binding site. Low complexity-rich tracts occupy residues 140–154 (TTAE…AAET) and 163–182 (KETT…PAET). The tract at residues 140–210 (TTAESTTAES…SVAQSSSSAA (71 aa)) is disordered. Basic and acidic residues predominate over residues 183–199 (SKAEETSKAAETTKAEE). Residues 200–210 (SSVAQSSSSAA) are compositionally biased toward low complexity. A lipid anchor (GPI-anchor amidated asparagine) is attached at N221. The propeptide at 222–241 (AGNMPAVAIGGVIAAVAALF) is removed in mature form.

Belongs to the RBT5 family. As to quaternary structure, interacts with PGA7. Post-translationally, the GPI-anchor is attached to the protein in the endoplasmic reticulum and serves to target the protein to the cell surface. There, the glucosamine-inositol phospholipid moiety is cleaved off and the GPI-modified mannoprotein is covalently attached via its lipidless GPI glycan remnant to the 1,6-beta-glucan of the outer cell wall layer. In terms of processing, mannosylated.

The protein localises to the secreted. The protein resides in the cell wall. It is found in the cell membrane. Functionally, GPI-linked hyphal surface heme-binding protein involved in heme-iron utilization. Heme transfer occurs between PGA7, RBT5 and CSA2 supporting a model in which the 3 CFEM proteins cooperate in a heme-acquisition system and form a cross-cell wall heme-transfer cascade. The ability to acquire iron from host tissues is a major virulence factor of pathogenic microorganisms. Required for biofilm formation. In Candida albicans (strain SC5314 / ATCC MYA-2876) (Yeast), this protein is GPI-anchored hemophore RBT5.